A 128-amino-acid polypeptide reads, in one-letter code: Small ribosomal subunit protein uS13 (128 aa).

The interval 85-128 (GSYRGLRHRRSLPVRGQRTHTNARTRKGPRRGTVANKKKATGKT) is disordered. Positions 89 to 128 (GLRHRRSLPVRGQRTHTNARTRKGPRRGTVANKKKATGKT) are enriched in basic residues.

Belongs to the universal ribosomal protein uS13 family. Part of the 30S ribosomal subunit. Forms a loose heterodimer with protein S19. Forms two bridges to the 50S subunit in the 70S ribosome.

Functionally, located at the top of the head of the 30S subunit, it contacts several helices of the 16S rRNA. In the 70S ribosome it contacts the 23S rRNA (bridge B1a) and protein L5 of the 50S subunit (bridge B1b), connecting the 2 subunits; these bridges are implicated in subunit movement. Contacts the tRNAs in the A and P-sites. The chain is Small ribosomal subunit protein uS13 from Solibacter usitatus (strain Ellin6076).